The following is a 559-amino-acid chain: 3-aminoavenalumate diazotase (559 aa).

Ser181 lines the Mg(2+) pocket. Residues Ala227, Gly332, and Ser336 each contribute to the ATP site. A Mg(2+)-binding site is contributed by Glu337. The ATP site is built by Asp416 and Arg437.

This sequence belongs to the ATP-dependent AMP-binding enzyme family. It depends on Mg(2+) as a cofactor.

It catalyses the reaction 3-aminoavenalumate + nitrite + ATP = 3-diazoavenalumate + AMP + diphosphate + H2O. The enzyme catalyses (E)-3-aminocoumarate + nitrite + ATP + H(+) = (E)-3-diazocoumarate + AMP + diphosphate + H2O. It carries out the reaction 3-amino-4-hydroxybenzoate + nitrite + ATP + H(+) = 3-diazo-4-hydroxybenzoate + AMP + diphosphate + H2O. Functionally, ligase involved in the biosynthesis of avenalumic acid (AVA). Catalyzes the diazotization of 3-aminoavenalumic acid (3-AAA) to 3-diazoavenalumic acid (3-DAA). It can also act on 3-aminocoumaric acid (3-ACA) and 3-amino-4-hydroxybenzoic acid (3,4-AHBA) with lower activity. This chain is 3-aminoavenalumate diazotase, found in Streptomyces sp.